We begin with the raw amino-acid sequence, 266 residues long: 3-deoxy-manno-octulosonate cytidylyltransferase 1 (266 aa).

Belongs to the KdsB family.

The protein localises to the cytoplasm. It catalyses the reaction 3-deoxy-alpha-D-manno-oct-2-ulosonate + CTP = CMP-3-deoxy-beta-D-manno-octulosonate + diphosphate. It participates in nucleotide-sugar biosynthesis; CMP-3-deoxy-D-manno-octulosonate biosynthesis; CMP-3-deoxy-D-manno-octulosonate from 3-deoxy-D-manno-octulosonate and CTP: step 1/1. It functions in the pathway bacterial outer membrane biogenesis; lipopolysaccharide biosynthesis. In terms of biological role, activates KDO (a required 8-carbon sugar) for incorporation into bacterial lipopolysaccharide in Gram-negative bacteria. The protein is 3-deoxy-manno-octulosonate cytidylyltransferase 1 of Paraburkholderia phytofirmans (strain DSM 17436 / LMG 22146 / PsJN) (Burkholderia phytofirmans).